We begin with the raw amino-acid sequence, 247 residues long: Cell division protein ZapD (247 aa).

The protein belongs to the ZapD family. As to quaternary structure, interacts with FtsZ.

It is found in the cytoplasm. Functionally, cell division factor that enhances FtsZ-ring assembly. Directly interacts with FtsZ and promotes bundling of FtsZ protofilaments, with a reduction in FtsZ GTPase activity. The sequence is that of Cell division protein ZapD from Salmonella agona (strain SL483).